A 184-amino-acid polypeptide reads, in one-letter code: UPF0316 protein BPUM_0594 (184 aa).

3 helical membrane passes run 9 to 29, 41 to 61, and 67 to 87; these read AFTM…FSTM, AAAF…SIVL, and IQNV…GMKI.

The protein belongs to the UPF0316 family.

It is found in the cell membrane. The chain is UPF0316 protein BPUM_0594 from Bacillus pumilus (strain SAFR-032).